A 956-amino-acid chain; its full sequence is MSKKRLHEIAKEIGKSSKEVVERAKSLGLDVKSHASSVEEADANKIASSFSAGVTKNVQAGSAKDKQVAEQKAKAAKATTPQPAASKAAEKPAAATQEASQPVAVKPKSRNFKAEREARAKEQVARRQAGQNRSNDRKSDYRQLGRSQGQQTERAGHKSQNQQRDRRFDNRPSSGNNRNDGHRQAGNRDKNRSFNANSRQQDTGRQGQTQAGAPKIDFKARAAALKAEQNAEYARQRESRFREQEEAKRLEQQARQEAKAAALKAQTEDKKHREASAKATESVASMAAASVAKPVDKRRKKQNRPDKGHDRDHGLEDGQKKNKKSWNSQNQVRNQKNSNWNNNKKNKKGKHHKNSNTAPKPVTERKFHELPKEFEYSEGMTVAEIAKRIKREPAEIVKKLFMMGVMATQNQSLDGDTIELLMVDYGIEAKAKVEVDEADIERFFTDDSYLNPENIVERAPVVTIMGHVDHGKTTLLDTLRNSRVATGEAGGITQHIGAYQIEEAGKKITFLDTPGHAAFTSMRARGASVTDITILIVAADDGVMPQTIEAINHSKAAGVPIIVAINKIDKPGANPERVISELAEHGIISTAWGGECEFVEISAKFNKNIDELLETVLLVAEVEELKADPTVRAIGTVIEARLDKGKGAVATLLVQQGTLHVQDPIVVGNTFGRVRAMTNDLGRRVKSAEPSTPVSITGLNETPMAGDHFAVYADEKAARAAGEERAKRALLKQRQNTQRVSLDNLFDTLKAGEIKTVNVIIKADVQGSVEALAASLLKIDVEGVRVNVVHSAVGAINESDVTLAEASNAVIIGFNVRPTPQARQQADTDDVEIRLHSIIYKVIEEVEEAMKGKLDPEYQEKMLGEAIIRETFKVSKVGTIGGFMVVNGKVTRDSSVRVIRDSVVIFDGKLASLKHYKDDVKEIGNAQEGGLMIEGFNDIKVDDTIEAYVMEEITRK.

The disordered stretch occupies residues 33-370 (SHASSVEEAD…PVTERKFHEL (338 aa)). The span at 46–60 (IASSFSAGVTKNVQA) shows a compositional bias: polar residues. Residues 63–73 (AKDKQVAEQKA) show a composition bias toward basic and acidic residues. The span at 76 to 100 (AKATTPQPAASKAAEKPAAATQEAS) shows a compositional bias: low complexity. Composition is skewed to basic and acidic residues over residues 112–125 (FKAE…EQVA), 134–143 (SNDRKSDYRQ), and 179–192 (NDGH…DKNR). Low complexity predominate over residues 199–213 (RQQDTGRQGQTQAGA). 2 stretches are compositionally biased toward basic and acidic residues: residues 234–258 (ARQR…RQEA) and 266–276 (QTEDKKHREAS). Low complexity predominate over residues 277–293 (AKATESVASMAAASVAK). The span at 303 to 320 (NRPDKGHDRDHGLEDGQK) shows a compositional bias: basic and acidic residues. Positions 325-343 (SWNSQNQVRNQKNSNWNNN) are enriched in low complexity. The segment covering 344–354 (KKNKKGKHHKN) has biased composition (basic residues). The 170-residue stretch at 457-626 (ERAPVVTIMG…LLVAEVEELK (170 aa)) folds into the tr-type G domain. A G1 region spans residues 466 to 473 (GHVDHGKT). 466–473 (GHVDHGKT) provides a ligand contact to GTP. The segment at 491-495 (GITQH) is G2. The interval 512 to 515 (DTPG) is G3. Residues 512–516 (DTPGH) and 566–569 (NKID) each bind GTP. The G4 stretch occupies residues 566–569 (NKID). The tract at residues 602-604 (SAK) is G5.

It belongs to the TRAFAC class translation factor GTPase superfamily. Classic translation factor GTPase family. IF-2 subfamily.

The protein localises to the cytoplasm. In terms of biological role, one of the essential components for the initiation of protein synthesis. Protects formylmethionyl-tRNA from spontaneous hydrolysis and promotes its binding to the 30S ribosomal subunits. Also involved in the hydrolysis of GTP during the formation of the 70S ribosomal complex. This Streptococcus equi subsp. equi (strain 4047) protein is Translation initiation factor IF-2.